We begin with the raw amino-acid sequence, 256 residues long: Probable elongation factor 1-delta (256 aa).

Phosphoserine is present on residues S37, S53, and S89. The disordered stretch occupies residues 110–146 (NGVSKEPEVEAKKPEANDDDDDVDLFGSDSEEEDGEA). Residues 114-125 (KEPEVEAKKPEA) are compositionally biased toward basic and acidic residues. A compositionally biased stretch (acidic residues) spans 126-144 (NDDDDDVDLFGSDSEEEDG). Phosphoserine occurs at positions 137 and 139.

The protein belongs to the EF-1-beta/EF-1-delta family. In terms of assembly, EF-1 is composed of 4 subunits: alpha, beta, delta, and gamma.

Functionally, EF-1-beta and EF-1-delta stimulate the exchange of GDP bound to EF-1-alpha to GTP. This chain is Probable elongation factor 1-delta (eEF1delta), found in Drosophila melanogaster (Fruit fly).